The following is a 179-amino-acid chain: Large ribosomal subunit protein uL5 (179 aa).

The protein belongs to the universal ribosomal protein uL5 family. In terms of assembly, part of the 50S ribosomal subunit; part of the 5S rRNA/L5/L18/L25 subcomplex. Contacts the 5S rRNA and the P site tRNA. Forms a bridge to the 30S subunit in the 70S ribosome.

In terms of biological role, this is one of the proteins that bind and probably mediate the attachment of the 5S RNA into the large ribosomal subunit, where it forms part of the central protuberance. In the 70S ribosome it contacts protein S13 of the 30S subunit (bridge B1b), connecting the 2 subunits; this bridge is implicated in subunit movement. Contacts the P site tRNA; the 5S rRNA and some of its associated proteins might help stabilize positioning of ribosome-bound tRNAs. This chain is Large ribosomal subunit protein uL5, found in Anoxybacillus flavithermus (strain DSM 21510 / WK1).